We begin with the raw amino-acid sequence, 156 residues long: Small ribosomal subunit protein uS7 (156 aa).

It belongs to the universal ribosomal protein uS7 family. In terms of assembly, part of the 30S ribosomal subunit. Contacts proteins S9 and S11.

In terms of biological role, one of the primary rRNA binding proteins, it binds directly to 16S rRNA where it nucleates assembly of the head domain of the 30S subunit. Is located at the subunit interface close to the decoding center, probably blocks exit of the E-site tRNA. The sequence is that of Small ribosomal subunit protein uS7 from Xanthobacter autotrophicus (strain ATCC BAA-1158 / Py2).